A 372-amino-acid polypeptide reads, in one-letter code: Probable E3 ubiquitin-protein ligase makorin-1 (372 aa).

C3H1-type zinc fingers lie at residues 20–45 (KHVTCRYFMHGLCKEGDNCRYSHDLT) and 48–75 (KPAAMICKFFQKGNCVFGERCRFDHCKP). The interval 78–110 (NEEFSSPQMLPPSSPSPSTDPESSQPAPRPKTQ) is disordered. Positions 93–103 (SPSTDPESSQP) are enriched in low complexity. Residues 153–180 (ALRKQLCPYAAVGECRYGINCAYLHGDV) form a C3H1-type 3 zinc finger. The interval 181 to 208 (CDMCGLQVLHPTDNSQRSQHTKACIEAH) is makorin-type Cys-His. Residues 226 to 280 (CGVCMEVVFEKANPSERRFGILSNCNHCYCLKCIRKWRSAKQFESKIIKSCPECR) form an RING-type zinc finger. The segment at 309 to 338 (GMGRKPCRYFDEGRGICPFGANCFYKHAFP) adopts a C3H1-type 4 zinc-finger fold.

The enzyme catalyses S-ubiquitinyl-[E2 ubiquitin-conjugating enzyme]-L-cysteine + [acceptor protein]-L-lysine = [E2 ubiquitin-conjugating enzyme]-L-cysteine + N(6)-ubiquitinyl-[acceptor protein]-L-lysine.. Its pathway is protein modification; protein ubiquitination. In terms of biological role, E3 ubiquitin ligase catalyzing the covalent attachment of ubiquitin moieties onto substrate proteins. The protein is Probable E3 ubiquitin-protein ligase makorin-1 of Tetraodon nigroviridis (Spotted green pufferfish).